A 613-amino-acid chain; its full sequence is MSESERSEGFPEGFAGAGSGSLSSEDAAELEALRREAAMLREQLENAVGPQSGLRSARDVHQLEARIDSLAARNAKLMDTLKEARQQLLALREEVDRLGQPPSGYGVLLATHDDDTVDVFTSGRKMRLTCSPNIEVKELKQGQTVRLNEALTVVEAGNFEAVGEISTLREILADGHRALVVGHADEERIVWLAEPLVAAKDLPDEPTDYFDDSRPRKLRPGDSLLVDTKAGYAFERIPKAEVEDLVLEEVPDVSYNDIGGLGRQIEQIRDAVELPFLHKDLYKEYSLRPPKGVLLYGPPGCGKTLIAKAVANSLAKKMAEVRGDDAREAKSYFLNIKGPELLNKFVGETERHIRLIFQRAREKASEGTPVIVFFDEMDSIFRTRGTGVSSDVETTVVPQLLSEIDGVEGLENVIVIGASNREDMIDPAILRPGRLDVKIKIERPDAEAAQDIFSKYLTEDLPVHADDLTEFNGDRALCIKAMIEKVVDRMYAEIDDNRFLEVTYANGDKEVMYFKDFNSGAMIQNVVDRAKKYAIKSVLETGQKGLRIQHLLDSIVDEFAENEDLPNTTNPDDWARISGKKGERIVYIRTLVTGKSSSASRAIDTESNLGQYL.

A disordered region spans residues 1–29 (MSESERSEGFPEGFAGAGSGSLSSEDAAE). A coiled-coil region spans residues 23 to 100 (SSEDAAELEA…LREEVDRLGQ (78 aa)). 300-305 (GCGKTL) is a binding site for ATP. Lys-595 is covalently cross-linked (Isoglutamyl lysine isopeptide (Lys-Gln) (interchain with Q-Cter in protein Pup)). Positions 612 to 613 (YL) are docks into pockets in the proteasome alpha-ring.

The protein belongs to the AAA ATPase family. In terms of assembly, homohexamer. Assembles into a hexameric ring structure that caps the 20S proteasome core. Strongly interacts with the prokaryotic ubiquitin-like protein Pup through a hydrophobic interface; the interacting region of ARC lies in its N-terminal coiled-coil domain. There is one Pup binding site per ARC hexamer ring. Upon ATP-binding, the C-terminus of ARC interacts with the alpha-rings of the proteasome core, possibly by binding to the intersubunit pockets.

Its pathway is protein degradation; proteasomal Pup-dependent pathway. Functionally, ATPase which is responsible for recognizing, binding, unfolding and translocation of pupylated proteins into the bacterial 20S proteasome core particle. May be essential for opening the gate of the 20S proteasome via an interaction with its C-terminus, thereby allowing substrate entry and access to the site of proteolysis. Thus, the C-termini of the proteasomal ATPase may function like a 'key in a lock' to induce gate opening and therefore regulate proteolysis. The protein is Proteasome-associated ATPase of Mycolicibacterium smegmatis (strain ATCC 700084 / mc(2)155) (Mycobacterium smegmatis).